Consider the following 225-residue polypeptide: Agamous-like MADS-box protein MADS1 (225 aa).

In terms of tissue distribution, expressed in flowers and seeds.

The protein resides in the nucleus. Its function is as follows. Probable transcription factor involved in flower development. The polypeptide is Agamous-like MADS-box protein MADS1 (Vitis vinifera (Grape)).